Reading from the N-terminus, the 1812-residue chain is Putative surface cell antigen sca2 (1812 aa).

Positions 1–17 (MSTCLLTSSFLSTSARA) are cleaved as a signal peptide. 2 stretches are compositionally biased toward polar residues: residues 344–357 (FLNNNDTTKPSTGR) and 371–382 (MSNQSIHNTGTS). 3 disordered regions span residues 344–382 (FLNNNDTTKPSTGRSQKKSGSKNDHWYMSNQSIHNTGTS), 648–691 (LEQT…QGFS), and 1338–1462 (KQEN…KKDV). A compositionally biased stretch (pro residues) spans 656–685 (PNPPPLPLNGGIPNPPPLPLNGSMPPPPPL). Composition is skewed to basic and acidic residues over residues 1349–1367 (STKDDTQPEDSNKKSEQSD) and 1382–1393 (SKNDKSSDDKKS). Positions 1401 to 1416 (DEDDTGYATDEEELEE) are enriched in acidic residues. Over residues 1417–1455 (SNSTTNEELEESNSTTNEELEESNSTTNEELEESNSTTN) the composition is skewed to low complexity. An Autotransporter domain is found at 1533–1812 (ETSINRGVWI…QGLIKLKVNL (280 aa)).

It localises to the cell outer membrane. The polypeptide is Putative surface cell antigen sca2 (sca2) (Rickettsia sibirica (strain ATCC VR-151 / 246)).